Consider the following 200-residue polypeptide: Holliday junction resolvase RecU (200 aa).

Thr-82, Asp-84, Glu-97, and Gln-116 together coordinate Mg(2+).

Belongs to the RecU family. Requires Mg(2+) as cofactor.

It localises to the cytoplasm. It carries out the reaction Endonucleolytic cleavage at a junction such as a reciprocal single-stranded crossover between two homologous DNA duplexes (Holliday junction).. Functionally, endonuclease that resolves Holliday junction intermediates in genetic recombination. Cleaves mobile four-strand junctions by introducing symmetrical nicks in paired strands. Promotes annealing of linear ssDNA with homologous dsDNA. Required for DNA repair, homologous recombination and chromosome segregation. This Streptococcus gordonii (strain Challis / ATCC 35105 / BCRC 15272 / CH1 / DL1 / V288) protein is Holliday junction resolvase RecU.